The primary structure comprises 50 residues: U-megalopygitoxin(9)-Mo13 (50 aa).

The N-terminal stretch at 1–23 (MKLVFLFFIVAVMVSLFVGMTEA) is a signal peptide. Cysteines 33 and 40 form a disulfide.

It belongs to the caterpillar 9 family. In terms of tissue distribution, expressed by the venom apparatus.

The protein resides in the secreted. Probable toxin. The chain is U-megalopygitoxin(9)-Mo13 from Megalopyge opercularis (Southern flannel moth).